The primary structure comprises 513 residues: Putative ribose/galactose/methyl galactoside import ATP-binding protein 3 (513 aa).

2 consecutive ABC transporter domains span residues 15 to 252 (IELT…VGRQ) and 263 to 508 (TSAN…TQRE). 47 to 54 (GENGAGKS) is an ATP binding site.

Belongs to the ABC transporter superfamily. Carbohydrate importer 2 (CUT2) (TC 3.A.1.2) family.

The protein localises to the cell inner membrane. The catalysed reaction is D-ribose(out) + ATP + H2O = D-ribose(in) + ADP + phosphate + H(+). The enzyme catalyses D-galactose(out) + ATP + H2O = D-galactose(in) + ADP + phosphate + H(+). Its function is as follows. Part of an ABC transporter complex involved in carbohydrate import. Could be involved in ribose, galactose and/or methyl galactoside import. Responsible for energy coupling to the transport system. The chain is Putative ribose/galactose/methyl galactoside import ATP-binding protein 3 from Burkholderia ambifaria (strain ATCC BAA-244 / DSM 16087 / CCUG 44356 / LMG 19182 / AMMD) (Burkholderia cepacia (strain AMMD)).